The primary structure comprises 181 residues: Extracellular superoxide dismutase [Cu-Zn] (181 aa).

The N-terminal stretch at 1-18 (MMQYLVVSLALCATICSA) is a signal peptide. An N-linked (GlcNAc...) asparagine glycan is attached at N46. 3 residues coordinate Cu cation: H75, H77, and H92. A disulfide bridge connects residues C86 and C175. H92, H100, H109, and D112 together coordinate Zn(2+). A glycan (N-linked (GlcNAc...) asparagine) is linked at N119. H149 contributes to the Cu cation binding site. N-linked (GlcNAc...) asparagine glycosylation occurs at N159.

This sequence belongs to the Cu-Zn superoxide dismutase family. It depends on Cu cation as a cofactor. Requires Zn(2+) as cofactor. As to expression, expressed at higher levels in females compared to males.

It is found in the secreted. The catalysed reaction is 2 superoxide + 2 H(+) = H2O2 + O2. Protects the extracellular space from the toxic effects of reactive oxygen intermediates by converting superoxide radicals into hydrogen peroxide and oxygen. The chain is Extracellular superoxide dismutase [Cu-Zn] from Drosophila melanogaster (Fruit fly).